We begin with the raw amino-acid sequence, 495 residues long: Catalase B (495 aa).

The segment at 1–25 is disordered; the sequence is MSNNKKLTSLFGAPVSDRENSMTAG. Active-site residues include H55 and N128. Residue Y338 participates in heme binding.

This sequence belongs to the catalase family. In terms of assembly, homodimer. The cofactor is heme.

The catalysed reaction is 2 H2O2 = O2 + 2 H2O. In terms of biological role, decomposes hydrogen peroxide into water and oxygen; serves to protect cells from the toxic effects of hydrogen peroxide. This chain is Catalase B (katB), found in Staphylococcus xylosus.